The primary structure comprises 739 residues: Lysine decarboxylase (739 aa).

Residue Lys-367 is modified to N6-(pyridoxal phosphate)lysine. Residues 714–726 (ADEPGDKPSDTVK) are compositionally biased toward basic and acidic residues. The disordered stretch occupies residues 714 to 739 (ADEPGDKPSDTVKKAPGKKPSAAKKS). A compositionally biased stretch (basic residues) spans 728 to 739 (APGKKPSAAKKS).

The protein belongs to the Orn/Lys/Arg decarboxylase class-I family. Requires pyridoxal 5'-phosphate as cofactor.

Its subcellular location is the cytoplasm. The enzyme catalyses L-lysine + H(+) = cadaverine + CO2. The polypeptide is Lysine decarboxylase (Hafnia alvei).